We begin with the raw amino-acid sequence, 128 residues long: Phosphoribosyl-AMP cyclohydrolase (128 aa).

Aspartate 89 lines the Mg(2+) pocket. Zn(2+) is bound at residue cysteine 90. Mg(2+)-binding residues include aspartate 91 and aspartate 93. Positions 106 and 113 each coordinate Zn(2+).

Belongs to the PRA-CH family. Homodimer. Requires Mg(2+) as cofactor. The cofactor is Zn(2+).

The protein localises to the cytoplasm. The catalysed reaction is 1-(5-phospho-beta-D-ribosyl)-5'-AMP + H2O = 1-(5-phospho-beta-D-ribosyl)-5-[(5-phospho-beta-D-ribosylamino)methylideneamino]imidazole-4-carboxamide. It participates in amino-acid biosynthesis; L-histidine biosynthesis; L-histidine from 5-phospho-alpha-D-ribose 1-diphosphate: step 3/9. Functionally, catalyzes the hydrolysis of the adenine ring of phosphoribosyl-AMP. The sequence is that of Phosphoribosyl-AMP cyclohydrolase from Pyrobaculum calidifontis (strain DSM 21063 / JCM 11548 / VA1).